Reading from the N-terminus, the 542-residue chain is Chaperonin GroEL 2 (542 aa).

ATP is bound by residues 30–33, Lys-51, 87–91, Gly-415, and Asp-496; these read TLGP and DGTTT.

Belongs to the chaperonin (HSP60) family. As to quaternary structure, forms a cylinder of 14 subunits composed of two heptameric rings stacked back-to-back. Interacts with the co-chaperonin GroES.

It is found in the cytoplasm. The enzyme catalyses ATP + H2O + a folded polypeptide = ADP + phosphate + an unfolded polypeptide.. Its function is as follows. Together with its co-chaperonin GroES, plays an essential role in assisting protein folding. The GroEL-GroES system forms a nano-cage that allows encapsulation of the non-native substrate proteins and provides a physical environment optimized to promote and accelerate protein folding. This chain is Chaperonin GroEL 2, found in Sinorhizobium fredii (strain NBRC 101917 / NGR234).